The chain runs to 92 residues: Large ribosomal subunit protein bL27 (92 aa).

Positions 1–26 (MAHKKGASSSSNGRDSESKRLGVKRF) are disordered.

Belongs to the bacterial ribosomal protein bL27 family.

This chain is Large ribosomal subunit protein bL27, found in Corynebacterium aurimucosum (strain ATCC 700975 / DSM 44827 / CIP 107346 / CN-1) (Corynebacterium nigricans).